Reading from the N-terminus, the 596-residue chain is ATP-dependent RNA helicase dbp3 (596 aa).

Residues 1–17 (MPKRTLEDTELNPRDNY) show a composition bias toward basic and acidic residues. 2 disordered regions span residues 1–87 (MPKR…ESTS) and 115–139 (EEKVDIPESTDSATPISVAPQQNGT). Over residues 21–30 (SSKKSRKEKR) the composition is skewed to basic residues. Positions 47–120 (IDIEVESKEA…KEGKEEKVDI (74 aa)) form a coiled coil. The span at 123-139 (STDSATPISVAPQQNGT) shows a compositional bias: polar residues. A Q motif motif is present at residues 180 to 207 (IKFDYLPITDSAQRAPFKDFKAPTPIQA). The Helicase ATP-binding domain occupies 210 to 386 (WPFLLAGRDV…STFMTSPVKI (177 aa)). 223–230 (AETGSGKT) serves as a coordination point for ATP. A DEAD box motif is present at residues 332–335 (DEAD). The Helicase C-terminal domain occupies 417 to 566 (RLMQLLKQYQ…PVPDELLKFG (150 aa)).

The protein belongs to the DEAD box helicase family. DDX5/DBP2 subfamily.

The protein resides in the nucleus. It localises to the nucleolus. It carries out the reaction ATP + H2O = ADP + phosphate + H(+). Functionally, ATP-dependent RNA helicase required for 60S ribosomal subunit synthesis. Involved in efficient pre-rRNA processing, predominantly at site A3, which is necessary for the normal formation of 25S and 5.8S rRNAs. In Sclerotinia sclerotiorum (strain ATCC 18683 / 1980 / Ss-1) (White mold), this protein is ATP-dependent RNA helicase dbp3 (dbp3).